The chain runs to 714 residues: Polyribonucleotide nucleotidyltransferase (714 aa).

2 residues coordinate Mg(2+): aspartate 489 and aspartate 495. The region spanning 556-615 (PKIDTIKIDVDKIKVVIGKGGETIDKIIAETGVKIDIDEEGNVSIYSSDQDAINRAKEII) is the KH domain. An S1 motif domain is found at 625–693 (GEVYHAKVVR…DKGRIDASMK (69 aa)). Positions 691–714 (SMKALVPRPPKPEKSEAKKEGKHD) are disordered. Positions 700–714 (PKPEKSEAKKEGKHD) are enriched in basic and acidic residues.

This sequence belongs to the polyribonucleotide nucleotidyltransferase family. Mg(2+) serves as cofactor.

The protein resides in the cytoplasm. The catalysed reaction is RNA(n+1) + phosphate = RNA(n) + a ribonucleoside 5'-diphosphate. Involved in mRNA degradation. Catalyzes the phosphorolysis of single-stranded polyribonucleotides processively in the 3'- to 5'-direction. In Streptococcus equi subsp. zooepidemicus (strain MGCS10565), this protein is Polyribonucleotide nucleotidyltransferase.